A 99-amino-acid chain; its full sequence is Monothiol glutaredoxin-S11 (99 aa).

The 99-residue stretch at 1–99 (MDKVMRMSSE…LVPLVKPYLC (99 aa)) folds into the Glutaredoxin domain. C21 provides a ligand contact to [2Fe-2S] cluster.

It belongs to the glutaredoxin family. CC-type subfamily.

The protein resides in the cytoplasm. Its function is as follows. May only reduce GSH-thiol disulfides, but not protein disulfides. The polypeptide is Monothiol glutaredoxin-S11 (GRXS11) (Arabidopsis thaliana (Mouse-ear cress)).